The chain runs to 431 residues: 5-methylthioadenosine/S-adenosylhomocysteine deaminase (431 aa).

The Zn(2+) site is built by H61 and H63. Residues E90 and H183 each coordinate substrate. Zn(2+) is bound at residue H210. E213 and D298 together coordinate substrate. D298 is a Zn(2+) binding site.

It belongs to the metallo-dependent hydrolases superfamily. MTA/SAH deaminase family. The cofactor is Zn(2+).

The catalysed reaction is S-adenosyl-L-homocysteine + H2O + H(+) = S-inosyl-L-homocysteine + NH4(+). It catalyses the reaction S-methyl-5'-thioadenosine + H2O + H(+) = S-methyl-5'-thioinosine + NH4(+). Functionally, catalyzes the deamination of 5-methylthioadenosine and S-adenosyl-L-homocysteine into 5-methylthioinosine and S-inosyl-L-homocysteine, respectively. Is also able to deaminate adenosine. The protein is 5-methylthioadenosine/S-adenosylhomocysteine deaminase of Halobacterium salinarum (strain ATCC 700922 / JCM 11081 / NRC-1) (Halobacterium halobium).